Here is a 287-residue protein sequence, read N- to C-terminus: Ketoacyl reductase HetN (287 aa).

11 to 35 (LTGASRGLGVYIARALAKEQATVVC) lines the NAD(+) pocket. Position 142 (Ser142) interacts with substrate. Catalysis depends on Tyr155, which acts as the Proton acceptor.

This sequence belongs to the short-chain dehydrogenases/reductases (SDR) family.

Its function is as follows. May be involved in repressing heterocyst differentiation and may be essential for preventing all vegetative cells from differentiating. In Nostoc sp. (strain PCC 7120 / SAG 25.82 / UTEX 2576), this protein is Ketoacyl reductase HetN (hetN).